We begin with the raw amino-acid sequence, 620 residues long: Glutathione-regulated potassium-efflux system protein KefC (620 aa).

The next 12 helical transmembrane spans lie at H4–V24, L26–L46, S54–L74, G90–L110, V114–M134, F149–L169, M178–L198, V218–G238, G270–L290, L294–I314, W327–Q347, and S359–N379. Residues Q399–T518 form the RCK N-terminal domain. Residues G597–S620 form a disordered region.

It belongs to the monovalent cation:proton antiporter 2 (CPA2) transporter (TC 2.A.37) family. KefC subfamily. As to quaternary structure, homodimer. Interacts with the regulatory subunit KefF.

Its subcellular location is the cell inner membrane. Its function is as follows. Pore-forming subunit of a potassium efflux system that confers protection against electrophiles. Catalyzes K(+)/H(+) antiport. This chain is Glutathione-regulated potassium-efflux system protein KefC, found in Escherichia coli (strain K12 / MC4100 / BW2952).